The sequence spans 466 residues: Hydroxyacid-oxoacid transhydrogenase, mitochondrial (466 aa).

An N6-acetyllysine modification is found at K444. S451 is modified (phosphoserine).

The protein belongs to the iron-containing alcohol dehydrogenase family. Hydroxyacid-oxoacid transhydrogenase subfamily.

The protein resides in the mitochondrion. The catalysed reaction is (S)-3-hydroxybutanoate + 2-oxoglutarate = (R)-2-hydroxyglutarate + acetoacetate. It catalyses the reaction 4-hydroxybutanoate + 2-oxoglutarate = (R)-2-hydroxyglutarate + succinate semialdehyde. In terms of biological role, catalyzes the cofactor-independent reversible oxidation of gamma-hydroxybutyrate (GHB) to succinic semialdehyde (SSA) coupled to reduction of 2-ketoglutarate (2-KG) to D-2-hydroxyglutarate (D-2-HG). L-3-hydroxybutyrate (L-3-OHB) is also a substrate for HOT when using 2-KG as hydrogen acceptor, resulting in the formation of D-2-HG. The polypeptide is Hydroxyacid-oxoacid transhydrogenase, mitochondrial (ADHFE1) (Bos taurus (Bovine)).